The chain runs to 57 residues: Catalase-1 (57 aa).

Tyrosine 37 is a heme binding site.

Homodimer. The cofactor is heme.

It catalyses the reaction 2 H2O2 = O2 + 2 H2O. Decomposes hydrogen peroxide into water and oxygen; serves to protect cells from the toxic effects of hydrogen peroxide. In Comamonas terrigena, this protein is Catalase-1.